Consider the following 237-residue polypeptide: Leucyl/phenylalanyl-tRNA--protein transferase (237 aa).

The protein belongs to the L/F-transferase family.

The protein localises to the cytoplasm. It catalyses the reaction N-terminal L-lysyl-[protein] + L-leucyl-tRNA(Leu) = N-terminal L-leucyl-L-lysyl-[protein] + tRNA(Leu) + H(+). The enzyme catalyses N-terminal L-arginyl-[protein] + L-leucyl-tRNA(Leu) = N-terminal L-leucyl-L-arginyl-[protein] + tRNA(Leu) + H(+). It carries out the reaction L-phenylalanyl-tRNA(Phe) + an N-terminal L-alpha-aminoacyl-[protein] = an N-terminal L-phenylalanyl-L-alpha-aminoacyl-[protein] + tRNA(Phe). Functions in the N-end rule pathway of protein degradation where it conjugates Leu, Phe and, less efficiently, Met from aminoacyl-tRNAs to the N-termini of proteins containing an N-terminal arginine or lysine. The protein is Leucyl/phenylalanyl-tRNA--protein transferase (aat) of Vibrio vulnificus (strain CMCP6).